The chain runs to 306 residues: Dirigent protein 24 (306 aa).

The signal sequence occupies residues M1 to S21. Positions P36–P61 are disordered.

Belongs to the plant dirigent protein family. In terms of assembly, homodimer.

Its subcellular location is the secreted. The protein resides in the extracellular space. It localises to the apoplast. Its function is as follows. Dirigent proteins impart stereoselectivity on the phenoxy radical-coupling reaction, yielding optically active lignans from two molecules of coniferyl alcohol in the biosynthesis of lignans, flavonolignans, and alkaloids and thus plays a central role in plant secondary metabolism. This is Dirigent protein 24 (DIR24) from Arabidopsis thaliana (Mouse-ear cress).